A 79-amino-acid polypeptide reads, in one-letter code: D-alanyl carrier protein (79 aa).

Positions M1 to R77 constitute a Carrier domain. The residue at position 35 (S35) is an O-(pantetheine 4'-phosphoryl)serine.

The protein belongs to the DltC family. In terms of processing, 4'-phosphopantetheine is transferred from CoA to a specific serine of apo-DCP.

It localises to the cytoplasm. It participates in cell wall biogenesis; lipoteichoic acid biosynthesis. Carrier protein involved in the D-alanylation of lipoteichoic acid (LTA). The loading of thioester-linked D-alanine onto DltC is catalyzed by D-alanine--D-alanyl carrier protein ligase DltA. The DltC-carried D-alanyl group is further transferred to cell membrane phosphatidylglycerol (PG) by forming an ester bond, probably catalyzed by DltD. D-alanylation of LTA plays an important role in modulating the properties of the cell wall in Gram-positive bacteria, influencing the net charge of the cell wall. This is D-alanyl carrier protein from Lactobacillus johnsonii (strain CNCM I-12250 / La1 / NCC 533).